Reading from the N-terminus, the 197-residue chain is Phosphoheptose isomerase (197 aa).

The SIS domain maps to methionine 36–glutamate 197. Substrate is bound at residue asparagine 51–glycine 53. Zn(2+)-binding residues include histidine 60 and glutamate 64. Substrate-binding positions include glutamate 64, asparagine 93–aspartate 94, serine 119–serine 121, serine 124, and glutamine 174. Zn(2+) is bound by residues glutamine 174 and histidine 182.

It belongs to the SIS family. GmhA subfamily. As to quaternary structure, homotetramer. It depends on Zn(2+) as a cofactor.

The protein localises to the cytoplasm. It carries out the reaction 2 D-sedoheptulose 7-phosphate = D-glycero-alpha-D-manno-heptose 7-phosphate + D-glycero-beta-D-manno-heptose 7-phosphate. It functions in the pathway carbohydrate biosynthesis; D-glycero-D-manno-heptose 7-phosphate biosynthesis; D-glycero-alpha-D-manno-heptose 7-phosphate and D-glycero-beta-D-manno-heptose 7-phosphate from sedoheptulose 7-phosphate: step 1/1. Functionally, catalyzes the isomerization of sedoheptulose 7-phosphate in D-glycero-D-manno-heptose 7-phosphate. This Chromohalobacter salexigens (strain ATCC BAA-138 / DSM 3043 / CIP 106854 / NCIMB 13768 / 1H11) protein is Phosphoheptose isomerase.